A 630-amino-acid polypeptide reads, in one-letter code: DNA mismatch repair protein MutL (630 aa).

2 disordered regions span residues valine 361–glutamate 386 and phenylalanine 407–glutamate 431. The segment covering phenylalanine 407 to serine 421 has biased composition (basic and acidic residues).

It belongs to the DNA mismatch repair MutL/HexB family.

Its function is as follows. This protein is involved in the repair of mismatches in DNA. It is required for dam-dependent methyl-directed DNA mismatch repair. May act as a 'molecular matchmaker', a protein that promotes the formation of a stable complex between two or more DNA-binding proteins in an ATP-dependent manner without itself being part of a final effector complex. This chain is DNA mismatch repair protein MutL, found in Geobacillus kaustophilus (strain HTA426).